Reading from the N-terminus, the 1379-residue chain is Partitioning defective protein 3 (1379 aa).

The span at 1–23 (MSASSTSSSSTSCPEGGEPSGSC) shows a compositional bias: low complexity. Disordered regions lie at residues 1 to 32 (MSAS…GEST) and 208 to 335 (YNVG…SDRK). Polar residues-rich tracts occupy residues 239-256 (SFDQ…PKPS) and 272-284 (ILRS…ASGS). Composition is skewed to basic and acidic residues over residues 302–315 (EVEK…ERKS) and 322–335 (DKNP…SDRK). PDZ domains lie at 381–483 (LVTF…IINR) and 515–599 (VVEL…SRVS). A coiled-coil region spans residues 606–626 (TSASSENKENEETLKVVEEEK). The region spanning 659–750 (VIPFINGSSS…EVGMISSNVR (92 aa)) is the PDZ 3 domain. 5 disordered regions span residues 767–873 (DLSR…MGAA), 887–918 (HQRQ…RSPM), 949–1085 (QSME…GGNV), 1273–1301 (VEPV…SGSS), and 1350–1379 (AYET…FPQY). 2 stretches are compositionally biased toward low complexity: residues 776–786 (SSPSPSSRMSS) and 798–826 (ATRG…AVPA). Basic and acidic residues-rich tracts occupy residues 828–844 (LTER…RNDE) and 854–869 (FNRE…EKRG). Low complexity predominate over residues 894–912 (PTSSTQKRSKSQPRSSSQR). Residues 967 to 977 (QIPTGSSSKVQ) show a composition bias toward polar residues. 2 stretches are compositionally biased toward basic and acidic residues: residues 1030 to 1040 (KSRDASPEKTP) and 1048 to 1060 (SVER…DERN). The span at 1290–1301 (STSSGAVASGSS) shows a compositional bias: low complexity.

This sequence belongs to the PAR3 family. In terms of assembly, required, together with pkc-3, for the localization of par-6; par-6 is involved in localizing/maintaining par-3 at the cell periphery. Interacts with par-6 and pkc-3 for localization at the periphery of anterior cortex of the embryo. Asymmetrically distributed at the periphery of the zygote and in dividing blastomeres of the germline lineage. Coexpressed with par-6; patchy expression observed at the periphery after completion of meiosis I and in meiosis II. On completion of metaphase II, expression is restricted to the anterior 85% of embryo length; this decreases to 55% in embryos between prophase and telophase of the first mitosis. During the first cleavage, expression is detected in the advancing furrow. Transiently coexpressed and colocalized asymmetrically with par-6 and pkc-3, in the developing somatic gonad, including the spermathecal precursor cells of L4 larvae.

It is found in the cytoplasm. In terms of biological role, in cooperation with pkc-3, required for establishing cell polarity and regulating spindle orientation in the early embryo. Localization is crucial for recruiting par-6 and pkc-3 to the peripheral apical cortex and restricting par-2 to basolateral surfaces. Necessary for apicobasal and anterior-posterior asymmetries associated with cell adhesion and gastrulation during the first few cycles of embryogenesis, and also for epithelial cell polarity in the distal spermatheca. Regulates the asymmetric localization of csnk-1, ppk-1 and gpr-1/2 during the first embryonic division. The polypeptide is Partitioning defective protein 3 (Caenorhabditis elegans).